We begin with the raw amino-acid sequence, 354 residues long: Protein RecA (354 aa).

67–74 (GPESSGKT) provides a ligand contact to ATP.

This sequence belongs to the RecA family.

It localises to the cytoplasm. In terms of biological role, can catalyze the hydrolysis of ATP in the presence of single-stranded DNA, the ATP-dependent uptake of single-stranded DNA by duplex DNA, and the ATP-dependent hybridization of homologous single-stranded DNAs. It interacts with LexA causing its activation and leading to its autocatalytic cleavage. This Serratia marcescens protein is Protein RecA.